Consider the following 97-residue polypeptide: Large ribosomal subunit protein eL30 (97 aa).

The protein belongs to the eukaryotic ribosomal protein eL30 family.

The polypeptide is Large ribosomal subunit protein eL30 (Methanoregula boonei (strain DSM 21154 / JCM 14090 / 6A8)).